The sequence spans 198 residues: MSKVLYIKANIKLEGVSRTFQVSDHFIEEYKKQHPEDEVVVLDLYKENIDFLRPEDLEAMADINDETKKNTTFLKYAFQFAEADKYVIAAPMWNLGSPAILKAYFDYITITGITFHYTAEGPKGLLQNKKAVHIVARGGEYGNAPYEMGDRYVKTILGFLGVSDIQTIAIENLDIIGADVEAKVKEGKEKAGLVAKEF.

92-95 (MWNL) contributes to the FMN binding site.

It belongs to the azoreductase type 1 family. Homodimer. FMN is required as a cofactor.

It catalyses the reaction 2 a quinone + NADH + H(+) = 2 a 1,4-benzosemiquinone + NAD(+). The catalysed reaction is N,N-dimethyl-1,4-phenylenediamine + anthranilate + 2 NAD(+) = 2-(4-dimethylaminophenyl)diazenylbenzoate + 2 NADH + 2 H(+). Quinone reductase that provides resistance to thiol-specific stress caused by electrophilic quinones. In terms of biological role, also exhibits azoreductase activity. Catalyzes the reductive cleavage of the azo bond in aromatic azo compounds to the corresponding amines. The protein is FMN-dependent NADH:quinone oxidoreductase of Lachnoclostridium phytofermentans (strain ATCC 700394 / DSM 18823 / ISDg) (Clostridium phytofermentans).